We begin with the raw amino-acid sequence, 115 residues long: Peptidyl-tRNA hydrolase (115 aa).

This sequence belongs to the PTH2 family.

The protein resides in the cytoplasm. It catalyses the reaction an N-acyl-L-alpha-aminoacyl-tRNA + H2O = an N-acyl-L-amino acid + a tRNA + H(+). Its function is as follows. The natural substrate for this enzyme may be peptidyl-tRNAs which drop off the ribosome during protein synthesis. The chain is Peptidyl-tRNA hydrolase from Archaeoglobus fulgidus (strain ATCC 49558 / DSM 4304 / JCM 9628 / NBRC 100126 / VC-16).